The sequence spans 376 residues: Homoserine dehydrogenase (376 aa).

2 residues coordinate NADP(+): asparagine 17 and isoleucine 18. Isoleucine 18 contacts NAD(+). NADPH is bound by residues isoleucine 18, lysine 67, threonine 99, and lysine 123. 2 residues coordinate NADP(+): threonine 99 and lysine 123. Threonine 99 contacts NAD(+). Positions 150, 153, 155, and 157 each coordinate Na(+). A Phosphoserine modification is found at serine 201. NADP(+) is bound by residues glycine 213 and glutamate 216. L-homoserine-binding residues include glutamate 216 and aspartate 227. Lysine 231 functions as the Proton donor in the catalytic mechanism. Glycine 349 serves as a coordination point for NADP(+). Residue glycine 349 participates in NAD(+) binding. Residue glycine 349 participates in NADPH binding.

This sequence belongs to the homoserine dehydrogenase family. The cofactor is a metal cation.

It carries out the reaction L-homoserine + NADP(+) = L-aspartate 4-semialdehyde + NADPH + H(+). The enzyme catalyses L-homoserine + NAD(+) = L-aspartate 4-semialdehyde + NADH + H(+). The protein operates within amino-acid biosynthesis; L-methionine biosynthesis via de novo pathway; L-homoserine from L-aspartate: step 3/3. Its pathway is amino-acid biosynthesis; L-threonine biosynthesis; L-threonine from L-aspartate: step 3/5. In terms of biological role, catalyzes the conversion of L-aspartate-beta-semialdehyde (L-Asa) to L-homoserine (L-Hse), the third step in the biosynthesis of amino acids that derive from aspartate (the aspartate family of amino acids), including methioinine and threonine, the latter of which is a precursor to isoleucine; production of homoserine leads to a branch-point in the pathway as it can either be O-phosphorylated for processing to threonine, or O-acylated for processing to methionine. The polypeptide is Homoserine dehydrogenase (Schizosaccharomyces pombe (strain 972 / ATCC 24843) (Fission yeast)).